The chain runs to 187 residues: Protein GrpE (187 aa).

The disordered stretch occupies residues 1 to 30; it reads MEKKETKNETEKTNKQDNKNTKSQKKENLN.

Belongs to the GrpE family. As to quaternary structure, homodimer.

The protein localises to the cytoplasm. In terms of biological role, participates actively in the response to hyperosmotic and heat shock by preventing the aggregation of stress-denatured proteins, in association with DnaK and GrpE. It is the nucleotide exchange factor for DnaK and may function as a thermosensor. Unfolded proteins bind initially to DnaJ; upon interaction with the DnaJ-bound protein, DnaK hydrolyzes its bound ATP, resulting in the formation of a stable complex. GrpE releases ADP from DnaK; ATP binding to DnaK triggers the release of the substrate protein, thus completing the reaction cycle. Several rounds of ATP-dependent interactions between DnaJ, DnaK and GrpE are required for fully efficient folding. This Borreliella afzelii (strain PKo) (Borrelia afzelii) protein is Protein GrpE.